We begin with the raw amino-acid sequence, 447 residues long: uncharacterized protein (447 aa).

Belongs to the class-II fumarase/aspartase family.

It localises to the cytoplasm. The protein localises to the nucleus. This is an uncharacterized protein from Schizosaccharomyces pombe (strain 972 / ATCC 24843) (Fission yeast).